Consider the following 644-residue polypeptide: Tripeptidyl-peptidase sed1 (644 aa).

Residues 1 to 18 form the signal peptide; it reads MRLSHVLLGTAAAAGVLA. Residues 19–196 constitute a propeptide, removed in mature form; it reads SPTPNDYVVH…KARSIEKRSF (178 aa). The 420-residue stretch at 224 to 643 folds into the Peptidase S53 domain; the sequence is AITPLCISAL…PALLDLFMSL (420 aa). Residue Asn235 is glycosylated (N-linked (GlcNAc...) asparagine). Catalysis depends on charge relay system residues Glu300 and Asp304. Residues Asn326, Asn332, and Asn519 are each glycosylated (N-linked (GlcNAc...) asparagine). Catalysis depends on Ser561, which acts as the Charge relay system. Residues Asp602, Ile603, Gly621, and Asp623 each coordinate Ca(2+).

The cofactor is Ca(2+). In terms of processing, N-glycosylated.

The protein localises to the secreted. The protein resides in the extracellular space. The catalysed reaction is Release of an N-terminal tripeptide from a polypeptide.. Secreted tripeptidyl-peptidase which degrades proteins at acidic pHs and is involved in virulence. In Aspergillus fumigatus (strain ATCC MYA-4609 / CBS 101355 / FGSC A1100 / Af293) (Neosartorya fumigata), this protein is Tripeptidyl-peptidase sed1 (sed1).